A 740-amino-acid polypeptide reads, in one-letter code: 1,4-alpha-glucan branching enzyme GlgB (740 aa).

The active-site Nucleophile is the D419. E472 (proton donor) is an active-site residue.

This sequence belongs to the glycosyl hydrolase 13 family. GlgB subfamily. Monomer.

It carries out the reaction Transfers a segment of a (1-&gt;4)-alpha-D-glucan chain to a primary hydroxy group in a similar glucan chain.. Its pathway is glycan biosynthesis; glycogen biosynthesis. In terms of biological role, catalyzes the formation of the alpha-1,6-glucosidic linkages in glycogen by scission of a 1,4-alpha-linked oligosaccharide from growing alpha-1,4-glucan chains and the subsequent attachment of the oligosaccharide to the alpha-1,6 position. The sequence is that of 1,4-alpha-glucan branching enzyme GlgB from Thiobacillus denitrificans (strain ATCC 25259 / T1).